The following is a 304-amino-acid chain: Recombination-associated protein RdgC (304 aa).

Belongs to the RdgC family.

The protein resides in the cytoplasm. Its subcellular location is the nucleoid. Its function is as follows. May be involved in recombination. The protein is Recombination-associated protein RdgC of Shewanella baltica (strain OS223).